The chain runs to 488 residues: MTEPTQLWGGRFKSGPSEALANLSRAPRSYFRLYKEDIAGSRAHASELKRAGVLDESEFSAIRAALEGIEADVGAGREEPIAADEDLHTFLERLLMARLGTLGGKLRAGRSRNDQTANNTRLYLRRMARELSQGVIAIEEALTEQASRHTETVMPGFTHLQPAQPVVLGHHLMAHAQSLLRDLQRFADWDRRFDRSPLGAAALAGSGIARRPDLSAIDLGYSAACENSIDAVAARDHVAEFLFICSLVAVDLSRLAEEICLWSSKQFSWVRLHDSYSTGSSIMPQKKNPDVAELTRGMSGTLIGNIAGFLATMKAMPLAYNRDLAEDKRSLFETIDVLELVLPAFAGMVGTLEFDVEKLREEAPKGFTLATEVADWLVGRDVPFAEAHEITGAVVRFCEERGHDLAGLTAEDLPGIDPRLHPEMLAALVLEKALASRNGYGATAPEKVREQIARFETALAECCAFAGGPIGGGAFAGAKDGAEEARRR.

Belongs to the lyase 1 family. Argininosuccinate lyase subfamily.

It is found in the cytoplasm. The enzyme catalyses 2-(N(omega)-L-arginino)succinate = fumarate + L-arginine. It functions in the pathway amino-acid biosynthesis; L-arginine biosynthesis; L-arginine from L-ornithine and carbamoyl phosphate: step 3/3. In Rhizobium meliloti (strain 1021) (Ensifer meliloti), this protein is Argininosuccinate lyase 2.